The following is a 111-amino-acid chain: Cell division protein FtsB (111 aa).

The Cytoplasmic portion of the chain corresponds to 1–3 (MGK). Residues 4–21 (LTLLLLILLGWLQYSLWL) form a helical membrane-spanning segment. Over 22–111 (GKNGIHDYVR…TNTSSNNTQR (90 aa)) the chain is Periplasmic. Residues 33-63 (KDDVVVQQGNNAKLKDRNEQLFAEIDDLNGG) adopt a coiled-coil conformation. The disordered stretch occupies residues 88–111 (VPESNHRNANTPSSTNTSSNNTQR). Residues 97–111 (NTPSSTNTSSNNTQR) are compositionally biased toward low complexity.

Belongs to the FtsB family. Part of a complex composed of FtsB, FtsL and FtsQ.

The protein resides in the cell inner membrane. Functionally, essential cell division protein. May link together the upstream cell division proteins, which are predominantly cytoplasmic, with the downstream cell division proteins, which are predominantly periplasmic. This chain is Cell division protein FtsB, found in Pectobacterium atrosepticum (strain SCRI 1043 / ATCC BAA-672) (Erwinia carotovora subsp. atroseptica).